A 64-amino-acid polypeptide reads, in one-letter code: MNCLCLCSLYSKSISAYFSEFSSTNIYKSYLRLPSVLYYVCMMHTMMPNQLDAVGIQSSESLLM.

This is an uncharacterized protein from Saccharomyces cerevisiae (strain ATCC 204508 / S288c) (Baker's yeast).